The following is a 335-amino-acid chain: Galactosylgalactosylxylosylprotein 3-beta-glucuronosyltransferase 1 (335 aa).

Residues 1–6 lie on the Cytoplasmic side of the membrane; sequence MPKRRD. The essential for transport from endoplasmic reticulum to Golgi apparatus and interaction with SAR1A stretch occupies residues 3–5; that stretch reads KRR. Residues 7 to 27 traverse the membrane as a helical; Signal-anchor for type II membrane protein segment; that stretch reads ILAIVLIVLPWTLLVTVWHQS. Over 28-335 the chain is Lumenal; that stretch reads TIAPLLTTHK…KGFTDPTVEI (308 aa). Residue 92–94 coordinates UDP-alpha-D-glucuronate; the sequence is PTY. 2 positions are modified to phosphothreonine: threonine 104 and threonine 109. Aspartate 123 provides a ligand contact to UDP-alpha-D-glucuronate. N-linked (GlcNAc...) asparagine glycosylation occurs at asparagine 141. UDP-alpha-D-glucuronate contacts are provided by arginine 166 and arginine 171. Asparagine 185 is a glycosylation site (N-linked (GlcNAc...) asparagine). 196 to 198 lines the UDP-alpha-D-glucuronate pocket; the sequence is DDD. Aspartate 198 contacts Mn(2+). The tract at residues 246–255 is interaction with galactose moiety of substrate glycoprotein; the sequence is FDPHRPFAID. Catalysis depends on glutamate 285, which acts as the Proton donor/acceptor. Asparagine 304 carries N-linked (GlcNAc...) asparagine glycosylation. UDP-alpha-D-glucuronate is bound at residue 312 to 314; sequence HTR.

The protein belongs to the glycosyltransferase 43 family. Homodimer. Interacts with SAR1A. Requires Mn(2+) as cofactor. In terms of processing, the soluble form derives from the membrane form by proteolytic processing.

It localises to the golgi apparatus membrane. The protein resides in the secreted. It catalyses the reaction 3-O-(beta-D-galactosyl-(1-&gt;3)-beta-D-galactosyl-(1-&gt;4)-beta-D-xylosyl)-L-seryl-[protein] + UDP-alpha-D-glucuronate = 3-O-(beta-D-GlcA-(1-&gt;3)-beta-D-Gal-(1-&gt;3)-beta-D-Gal-(1-&gt;4)-beta-D-Xyl)-L-seryl-[protein] + UDP + H(+). It participates in protein modification; protein glycosylation. In terms of biological role, involved in the biosynthesis of L2/HNK-1 carbohydrate epitope on glycoproteins. Can also play a role in glycosaminoglycan biosynthesis. Substrates include asialo-orosomucoid (ASOR), asialo-fetuin, and asialo-neural cell adhesion molecule. Requires sphingomyelin for activity: stearoyl-sphingomyelin was the most effective, followed by palmitoyl-sphingomyelin and lignoceroyl-sphingomyelin. Activity was demonstrated only for sphingomyelin with a saturated fatty acid and not for that with an unsaturated fatty acid, regardless of the length of the acyl group. The chain is Galactosylgalactosylxylosylprotein 3-beta-glucuronosyltransferase 1 from Canis lupus familiaris (Dog).